Reading from the N-terminus, the 191-residue chain is Dephospho-CoA kinase (191 aa).

Residues Ala-3–Val-191 enclose the DPCK domain. Residue Ala-11–Phe-16 coordinates ATP.

It belongs to the CoaE family.

It localises to the cytoplasm. The enzyme catalyses 3'-dephospho-CoA + ATP = ADP + CoA + H(+). It functions in the pathway cofactor biosynthesis; coenzyme A biosynthesis; CoA from (R)-pantothenate: step 5/5. Its function is as follows. Catalyzes the phosphorylation of the 3'-hydroxyl group of dephosphocoenzyme A to form coenzyme A. The sequence is that of Dephospho-CoA kinase from Rickettsia conorii (strain ATCC VR-613 / Malish 7).